Here is a 401-residue protein sequence, read N- to C-terminus: Argininosuccinate synthase (401 aa).

Residues 9 to 17 (AFSGGLDTS) and A35 contribute to the ATP site. Residues Y88 and S93 each coordinate L-citrulline. G117 serves as a coordination point for ATP. Residues T119, N123, and D124 each contribute to the L-aspartate site. N123 provides a ligand contact to L-citrulline. L-citrulline-binding residues include R127 and Y273.

Belongs to the argininosuccinate synthase family. Type 1 subfamily. In terms of assembly, homotetramer.

The protein localises to the cytoplasm. It carries out the reaction L-citrulline + L-aspartate + ATP = 2-(N(omega)-L-arginino)succinate + AMP + diphosphate + H(+). It participates in amino-acid biosynthesis; L-arginine biosynthesis; L-arginine from L-ornithine and carbamoyl phosphate: step 2/3. The sequence is that of Argininosuccinate synthase from Xylella fastidiosa (strain Temecula1 / ATCC 700964).